A 442-amino-acid chain; its full sequence is Phosphatidylserine synthase 2 (442 aa).

Residues 1 to 40 (MRRGERRGPAGPLGDGPALGLRRSTESEVYDDGTNTFFWR) are Cytoplasmic-facing. The chain crosses the membrane as a helical span at residues 41–61 (AHTLTVLFILTCALGYVTLLE). Topologically, residues 62 to 74 (ETPQDTAYNTKRG) are lumenal. Residues 75–95 (IVASILVFLCFGVTQAKDGPF) form a helical membrane-spanning segment. Topologically, residues 96–104 (SRPHPAYWR) are cytoplasmic. The helical transmembrane segment at 105–125 (FWLCVSVVYELFLIFILFQTV) threads the bilayer. The Lumenal portion of the chain corresponds to 126 to 291 (QDGRQFMKYI…EWKPASSLRR (166 aa)). N-linked (GlcNAc...) asparagine glycans are attached at residues asparagine 159 and asparagine 215. The helical transmembrane segment at 292–312 (WLAVCGIIFVFLLAELNTFYL) threads the bilayer. A topological domain (cytoplasmic) is located at residue lysine 313. Residues 314 to 334 (FVLWMPPEHYLVLLRLVFFVN) form a helical membrane-spanning segment. At 335–354 (VGGVAMREIYDFMDDPKFHK) the chain is on the lumenal side. The chain crosses the membrane as a helical span at residues 355–375 (KLGQQAWLVAAITATEFLIVV). The Cytoplasmic portion of the chain corresponds to 376–381 (KYDPYT). The chain crosses the membrane as a helical span at residues 382–402 (LTLSLPFYITQCWILGIILVL). Residues 403–442 (TWTAWRFFIRDITLRYKEIRRQKQEHKYEKDKCLSNGDGH) lie on the Lumenal side of the membrane.

Belongs to the phosphatidyl serine synthase family.

The protein resides in the endoplasmic reticulum membrane. The enzyme catalyses a 1,2-diacyl-sn-glycero-3-phosphoethanolamine + L-serine = a 1,2-diacyl-sn-glycero-3-phospho-L-serine + ethanolamine. It carries out the reaction 1-hexadecanoyl-2-(9Z-octadecenoyl)-sn-glycero-3-phosphoethanolamine + L-serine = 1-hexadecanoyl-2-(9Z-octadecenoyl)-sn-glycero-3-phospho-L-serine + ethanolamine. It catalyses the reaction 1-hexadecanoyl-2-(4Z,7Z,10Z,13Z,16Z,19Z-docosahexaenoyl)-sn-glycero-3-phosphoethanolamine + L-serine = 1-hexadecanoyl-2-(4Z,7Z,10Z,13Z,16Z,19Z-docosahexaenoyl)-sn-glycero-3-phosphoserine + ethanolamine. The catalysed reaction is 1-octadecanoyl-2-(5Z,8Z,11Z,14Z)-eicosatetraenoyl-sn-glycero-3-phosphoethanolamine + L-serine = 1-octadecanoyl-2-(5Z,8Z,11Z,14Z)-eicosatetraenoyl-sn-glycero-3-phosphoserine + ethanolamine. The enzyme catalyses 1-octadecanoyl-2-(4Z,7Z,10Z,13Z,16Z,19Z-docosahexaenoyl)-sn-glycero-3-phosphoethanolamine + L-serine = 1-octadecanoyl-2-(4Z,7Z,10Z,13Z,16Z,19Z-docosahexaenoyl)-sn-glycero-3-phosphoserine + ethanolamine. It carries out the reaction 1-(1Z-octadecenyl)-2-(4Z,7Z,10Z,13Z,16Z,19Z-docosahexaenoyl)-sn-glycero-3-phosphoethanolamine + L-serine = 1-(1Z-octadecenyl)-2-(4Z,7Z,10Z,13Z,16Z,19Z-docosahexaenoyl)-sn-glycero-3-phospho-L-serine + ethanolamine. It catalyses the reaction 1-octadecanoyl-2-(9Z-octadecenoyl)-sn-glycero-3-phosphoethanolamine + L-serine = 1-octadecanoyl-2-(9Z-octadecenoyl)-sn-glycero-3-phospho-L-serine + ethanolamine. The catalysed reaction is 1-(1Z-octadecenyl)-2-(9Z-octadecenoyl)-sn-glycero-3-phosphoethanolamine + L-serine = 1-(1Z-octadecenyl)-2-(9Z-octadecenoyl)-sn-glycero-3-phospho-L-serine + ethanolamine. The enzyme catalyses 1-(1Z-octadecenyl)-2-(5Z,8Z,11Z,14Z- eicosatetraenoyl)-sn-glycero-3-phosphoethanolamine + L-serine = 1-(1Z-octadecenyl)-2-(5Z,8Z,11Z,14Z-eicosatetraenoyl)-sn-glycero-3-phospho-L-serine + ethanolamine. The protein operates within phospholipid metabolism; phosphatidylserine biosynthesis. Functionally, catalyzes a base-exchange reaction in which the polar head group of phosphatidylethanolamine (PE) or phosphatidylcholine (PC) is replaced by L-serine. Catalyzes the conversion of phosphatatidylethanolamine and does not act on phosphatidylcholine. Can utilize both phosphatidylethanolamine (PE) plasmalogen and diacyl PE as substrate and the latter is six times better utilized, indicating the importance of an ester linkage at the sn-1 position. Although it shows no sn-1 fatty acyl preference, exhibits significant preference towards docosahexaenoic acid (22:6n-3) compared with 18:1 or 20:4 at the sn-2 position. The chain is Phosphatidylserine synthase 2 (PTDSS1) from Gallus gallus (Chicken).